The chain runs to 393 residues: Small ribosomal subunit protein bS1 (393 aa).

S1 motif domains follow at residues 16 to 90 (GDKV…LSKR), 108 to 173 (NQTI…LSRK), 194 to 262 (GDVI…LSIK), and 279 to 348 (GDVI…LSIK). The span at 356-369 (VIESDSETTQSYLD) shows a compositional bias: polar residues. Residues 356–381 (VIESDSETTQSYLDNGSDDEDNPTLG) are disordered.

This sequence belongs to the bacterial ribosomal protein bS1 family.

Functionally, binds mRNA; thus facilitating recognition of the initiation point. It is needed to translate mRNA with a short Shine-Dalgarno (SD) purine-rich sequence. This is Small ribosomal subunit protein bS1 (rpsA) from Staphylococcus saprophyticus subsp. saprophyticus (strain ATCC 15305 / DSM 20229 / NCIMB 8711 / NCTC 7292 / S-41).